Here is a 220-residue protein sequence, read N- to C-terminus: MKYRSVFDIIGPVMIGPSSSHTAGAARIGRVARSLFGREPERIIVSFYGSFAETYKGHGTDVAIIGGLLDFDTFDERIKTAIQIAEAKGIDIEFRVEDAVPVHPNTAKITISDEKGELELTGISIGGGKIEITELNGFELRLSGNHPAILVVHNDKFGTIAGVANVLAKFSINVGHMEVARKDIGQLALMTIEVDQNIDDHILDELSKLPNIIQVTKIAD.

Residues 148–220 form the ACT domain; sequence AILVVHNDKF…NIIQVTKIAD (73 aa).

Belongs to the iron-sulfur dependent L-serine dehydratase family. Heterodimer of an alpha chain and a beta chain. The cofactor is [4Fe-4S] cluster.

The enzyme catalyses L-serine = pyruvate + NH4(+). Its pathway is carbohydrate biosynthesis; gluconeogenesis. In Bacillus subtilis (strain 168), this protein is Probable L-serine dehydratase, beta chain (sdaAB).